Here is a 170-residue protein sequence, read N- to C-terminus: MVDTTKNTKLFTSYGVTTSKAVNPDMVAKMISKAKRPLFVVGTGVLRPEVLDRAVKIAQKANIPIAATGSSLKGFLDKGVDAKYINLHQLGFYLTDPAWPGLDGKGNYDTIIVLEFKKYYINQVLSGTKNFSNVKAISIGRDYIQNATMSFGNISREDHYAALDELIDNL.

Belongs to the CdhB family. As to quaternary structure, heterotetramer of two alpha and two epsilon subunits. The ACDS complex is made up of alpha, epsilon, beta, gamma and delta subunits with a probable stoichiometry of (alpha(2)epsilon(2))(4)-beta(8)-(gamma(1)delta(1))(8).

The protein operates within one-carbon metabolism; methanogenesis from acetate. Functionally, part of a complex that catalyzes the reversible cleavage of acetyl-CoA, allowing growth on acetate as sole source of carbon and energy. The alpha-epsilon subcomponent functions as a carbon monoxide dehydrogenase. The precise role of the epsilon subunit is unclear; it may have a stabilizing role within the alpha(2)epsilon(2) component and/or be involved in electron transfer to FAD during a potential FAD-mediated CO oxidation. The sequence is that of Acetyl-CoA decarbonylase/synthase complex subunit epsilon 1 (cdhB1) from Methanosarcina mazei (strain ATCC BAA-159 / DSM 3647 / Goe1 / Go1 / JCM 11833 / OCM 88) (Methanosarcina frisia).